Reading from the N-terminus, the 566-residue chain is MFSSGVALLTSYMLVLLLLAWPLGIALTRLVDDRLPLWLIRVESHIKFLENSQMKWQTYAAAILVFNLLGAALLFLLMLFQGSLPLNPLHLPDVSPLLAMNTAISFITNTNWQAYAGETTLSPLSQMLGLTVHNFLSAANGIAVAFVLMRALTRTGSQQLGNAWVDIWRITVYLLLPLSVIYALFLAQQGVVQSLMAQISVPGLSGVEQHIPLGPVASQEAIKMLGTNGGGYFNANSAHPFENPTALTNFVQMVSILLIPAALCICFGRVAGDNRVGSALLWTMGIMLSVAALLIMWAESQGHPVLANLAVDQQMSAIQSGGNMEGKETRFGLWASSLFATITTAASCGAVNAMHDSLTPLGGLIPMVLMQLGEVVFGGVGSGWYGMMLFVFLTVFLAGLMIGRTPEYLGKKIEIYEMKMVTIGLLIPPALVLLGTALAVILPQGLVSLQESGAHGFSEMLYAFSSAANNNGSAFAGLNSNTPFMNITLAVLMFVGRFGVMLPVLAIAGALIEKRHQPASAGSLACHGPLFVGMLIGVVLLIGALTFIPALALGPIVEHLTLWQTH.

12 helical membrane-spanning segments follow: residues 6-26 (VALLTSYMLVLLLLAWPLGIA), 60-80 (AAAILVFNLLGAALLFLLMLF), 128-148 (LGLTVHNFLSAANGIAVAFVL), 167-187 (IWRITVYLLLPLSVIYALFLA), 247-267 (LTNFVQMVSILLIPAALCICF), 276-296 (VGSALLWTMGIMLSVAALLIM), 331-351 (FGLWASSLFATITTAASCGAV), 361-381 (LGGLIPMVLMQLGEVVFGGVG), 383-403 (GWYGMMLFVFLTVFLAGLMIG), 423-443 (IGLLIPPALVLLGTALAVILP), 492-512 (LMFVGRFGVMLPVLAIAGALI), and 530-550 (LFVGMLIGVVLLIGALTFIPA).

It belongs to the KdpA family. The system is composed of three essential subunits: KdpA, KdpB and KdpC.

Its subcellular location is the cell inner membrane. Its function is as follows. Part of the high-affinity ATP-driven potassium transport (or Kdp) system, which catalyzes the hydrolysis of ATP coupled with the electrogenic transport of potassium into the cytoplasm. This subunit binds the periplasmic potassium ions and delivers the ions to the membrane domain of KdpB through an intramembrane tunnel. This is Potassium-transporting ATPase potassium-binding subunit from Tolumonas auensis (strain DSM 9187 / NBRC 110442 / TA 4).